A 474-amino-acid chain; its full sequence is Aspartate ammonia-lyase (474 aa).

Residues threonine 105, serine 144, threonine 145, asparagine 146, and threonine 191 each contribute to the L-aspartate site. The interval 322 to 331 is SS loop; it reads GSSIMPGKVN. Serine 323 serves as the catalytic Proton acceptor. Residues serine 324 and lysine 329 each coordinate L-aspartate.

The protein belongs to the class-II fumarase/aspartase family. Aspartase subfamily. Homotetramer.

The enzyme catalyses L-aspartate = fumarate + NH4(+). It catalyses the reaction L-phenylalanine = (E)-cinnamate + NH4(+). Does not require any divalent metal ion for activation of catalysis, but the activity is slightly increased in the presence of Mg(2+), Mn(2+), Ca(2+) or Co(2+). Functionally, catalyzes the reversible conversion of L-aspartate to fumarate and ammonia. Can also utilize L-phenylalanine to form cinnamic acid. Exhibits the highest specific activity towards L-phenylalanine, but catalytic efficiency is 3-fold higher with L-aspartate. The chain is Aspartate ammonia-lyase from Pseudomonas aeruginosa (strain ATCC 15692 / DSM 22644 / CIP 104116 / JCM 14847 / LMG 12228 / 1C / PRS 101 / PAO1).